The sequence spans 467 residues: UDP-N-acetylmuramate--L-alanine ligase (467 aa).

Residue Gly-114–Thr-120 coordinates ATP.

Belongs to the MurCDEF family.

Its subcellular location is the cytoplasm. The enzyme catalyses UDP-N-acetyl-alpha-D-muramate + L-alanine + ATP = UDP-N-acetyl-alpha-D-muramoyl-L-alanine + ADP + phosphate + H(+). It participates in cell wall biogenesis; peptidoglycan biosynthesis. Its function is as follows. Cell wall formation. The sequence is that of UDP-N-acetylmuramate--L-alanine ligase from Rhodopseudomonas palustris (strain BisB5).